The chain runs to 311 residues: tRNA dimethylallyltransferase (311 aa).

G13–T20 is a binding site for ATP. Position 15–20 (T15–T20) interacts with substrate. Interaction with substrate tRNA regions lie at residues D38 to Q41 and Q166 to R170.

It belongs to the IPP transferase family. In terms of assembly, monomer. The cofactor is Mg(2+).

It carries out the reaction adenosine(37) in tRNA + dimethylallyl diphosphate = N(6)-dimethylallyladenosine(37) in tRNA + diphosphate. Catalyzes the transfer of a dimethylallyl group onto the adenine at position 37 in tRNAs that read codons beginning with uridine, leading to the formation of N6-(dimethylallyl)adenosine (i(6)A). This Staphylococcus aureus (strain MSSA476) protein is tRNA dimethylallyltransferase.